The chain runs to 366 residues: Putative F-box protein At3g13624 (366 aa).

The 51-residue stretch at 1 to 51 (MTTISDLPEDVVEEILPRVPLTSLSAVRSICKTWNTLSKNRVLCKAAVKKQ) folds into the F-box domain.

The polypeptide is Putative F-box protein At3g13624 (Arabidopsis thaliana (Mouse-ear cress)).